The primary structure comprises 204 residues: Recombination protein RecR (204 aa).

The C4-type zinc finger occupies 58–75 (CTICQNITDVGTDPCAIC). Residues 83–181 (TVICVVESPV…AVTKIARGIP (99 aa)) form the Toprim domain.

Belongs to the RecR family.

May play a role in DNA repair. It seems to be involved in an RecBC-independent recombinational process of DNA repair. It may act with RecF and RecO. This Chlorobium chlorochromatii (strain CaD3) protein is Recombination protein RecR.